The following is a 359-amino-acid chain: 3-dehydroquinate synthase (359 aa).

NAD(+)-binding positions include 71 to 76 (DGEQYK), 105 to 109 (GVIGD), 129 to 130 (TT), lysine 142, lysine 151, and 169 to 172 (CLST). Residues glutamate 184, histidine 247, and histidine 264 each coordinate Zn(2+).

Belongs to the sugar phosphate cyclases superfamily. Dehydroquinate synthase family. Requires Co(2+) as cofactor. It depends on Zn(2+) as a cofactor. NAD(+) is required as a cofactor.

It localises to the cytoplasm. The catalysed reaction is 7-phospho-2-dehydro-3-deoxy-D-arabino-heptonate = 3-dehydroquinate + phosphate. It participates in metabolic intermediate biosynthesis; chorismate biosynthesis; chorismate from D-erythrose 4-phosphate and phosphoenolpyruvate: step 2/7. Its function is as follows. Catalyzes the conversion of 3-deoxy-D-arabino-heptulosonate 7-phosphate (DAHP) to dehydroquinate (DHQ). This Shewanella piezotolerans (strain WP3 / JCM 13877) protein is 3-dehydroquinate synthase.